The sequence spans 344 residues: GTP 3',8-cyclase (344 aa).

A Radical SAM core domain is found at 19-245; sequence PFGRAVTYLR…DIPYRTGGPA (227 aa). Arg28 is a GTP binding site. [4Fe-4S] cluster is bound by residues Cys35 and Cys39. Tyr41 contributes to the S-adenosyl-L-methionine binding site. Cys42 is a [4Fe-4S] cluster binding site. Arg77 provides a ligand contact to GTP. An S-adenosyl-L-methionine-binding site is contributed by Gly81. Thr111 serves as a coordination point for GTP. Position 135 (Ser135) interacts with S-adenosyl-L-methionine. Position 171 (Lys171) interacts with GTP. Met205 contacts S-adenosyl-L-methionine. [4Fe-4S] cluster-binding residues include Cys268 and Cys271. 273–275 lines the GTP pocket; it reads RVR. Cys285 serves as a coordination point for [4Fe-4S] cluster.

It belongs to the radical SAM superfamily. MoaA family. In terms of assembly, monomer and homodimer. [4Fe-4S] cluster serves as cofactor.

It carries out the reaction GTP + AH2 + S-adenosyl-L-methionine = (8S)-3',8-cyclo-7,8-dihydroguanosine 5'-triphosphate + 5'-deoxyadenosine + L-methionine + A + H(+). It functions in the pathway cofactor biosynthesis; molybdopterin biosynthesis. In terms of biological role, catalyzes the cyclization of GTP to (8S)-3',8-cyclo-7,8-dihydroguanosine 5'-triphosphate. The polypeptide is GTP 3',8-cyclase (Brucella canis (strain ATCC 23365 / NCTC 10854 / RM-666)).